The chain runs to 579 residues: Aspartate--tRNA(Asp/Asn) ligase (579 aa).

Glutamate 171 contributes to the L-aspartate binding site. The tract at residues 195-198 (QLFK) is aspartate. Residue arginine 217 participates in L-aspartate binding. ATP-binding positions include 217–219 (RDE) and glutamine 226. Histidine 444 contributes to the L-aspartate binding site. ATP is bound at residue glutamate 475. Position 482 (arginine 482) interacts with L-aspartate. 527–530 (GLDR) provides a ligand contact to ATP.

It belongs to the class-II aminoacyl-tRNA synthetase family. Type 1 subfamily. Homodimer.

It is found in the cytoplasm. It catalyses the reaction tRNA(Asx) + L-aspartate + ATP = L-aspartyl-tRNA(Asx) + AMP + diphosphate. In terms of biological role, aspartyl-tRNA synthetase with relaxed tRNA specificity since it is able to aspartylate not only its cognate tRNA(Asp) but also tRNA(Asn). Reaction proceeds in two steps: L-aspartate is first activated by ATP to form Asp-AMP and then transferred to the acceptor end of tRNA(Asp/Asn). The sequence is that of Aspartate--tRNA(Asp/Asn) ligase from Thermotoga maritima (strain ATCC 43589 / DSM 3109 / JCM 10099 / NBRC 100826 / MSB8).